A 254-amino-acid chain; its full sequence is 3-dehydroquinate dehydratase (254 aa).

3-dehydroquinate contacts are provided by residues 47 to 49 (EFR) and arginine 83. Residue histidine 144 is the Proton donor/acceptor of the active site. The active-site Schiff-base intermediate with substrate is lysine 171. Arginine 213, serine 232, and glutamine 236 together coordinate 3-dehydroquinate.

Belongs to the type-I 3-dehydroquinase family. Homodimer.

It carries out the reaction 3-dehydroquinate = 3-dehydroshikimate + H2O. The protein operates within metabolic intermediate biosynthesis; chorismate biosynthesis; chorismate from D-erythrose 4-phosphate and phosphoenolpyruvate: step 3/7. Involved in the third step of the chorismate pathway, which leads to the biosynthesis of aromatic amino acids. Catalyzes the cis-dehydration of 3-dehydroquinate (DHQ) and introduces the first double bond of the aromatic ring to yield 3-dehydroshikimate. The chain is 3-dehydroquinate dehydratase from Neisseria gonorrhoeae (strain ATCC 700825 / FA 1090).